Here is a 914-residue protein sequence, read N- to C-terminus: Valine--tRNA ligase (914 aa).

Positions 47-57 match the 'HIGH' region motif; sequence PYPTGELHMGH. A 'KMSKS' region motif is present at residues 552-556; it reads KMSKS. Residue K555 participates in ATP binding.

The protein belongs to the class-I aminoacyl-tRNA synthetase family. ValS type 2 subfamily.

It localises to the cytoplasm. It catalyses the reaction tRNA(Val) + L-valine + ATP = L-valyl-tRNA(Val) + AMP + diphosphate. Catalyzes the attachment of valine to tRNA(Val). As ValRS can inadvertently accommodate and process structurally similar amino acids such as threonine, to avoid such errors, it has a 'posttransfer' editing activity that hydrolyzes mischarged Thr-tRNA(Val) in a tRNA-dependent manner. The chain is Valine--tRNA ligase from Methanopyrus kandleri (strain AV19 / DSM 6324 / JCM 9639 / NBRC 100938).